Here is a 370-residue protein sequence, read N- to C-terminus: MSDTVRVELGARAYDVEIGAGLIASAGARIAPLLSRPKVWIVTEETVAALHMDALRAGLDAANIASEALVLPPGEATKSWPHLQRIADWLLSERVERADIVIAFGGGVIGDLAGFAAAIHRRGIRFVQIPTSLLAQVDSSVGGKTGINAPQGKNLIGAFHQPSLVLADIDVLGTLMPRDFLAGYGEVAKYGMLGDAPFFEWLEANGPAMAKGDPALRQEAVRRSVQMKADIVARDETEQGDRALLNLGHTFCHALEAATGYSDRLLHGEGVAIGCALAFELSARLGLCSQEDPSRVRAHLAAMGTRRDLSDIPGDLPDADALITLMGQDKKVVAGQLRFILARGIGHAFVTADVPTDAVKALLTDALAGR.

Residues 107–111 (GVIGD), 131–132 (TS), lysine 144, and lysine 153 contribute to the NAD(+) site. 3 residues coordinate Zn(2+): glutamate 186, histidine 249, and histidine 267.

The protein belongs to the sugar phosphate cyclases superfamily. Dehydroquinate synthase family. Co(2+) is required as a cofactor. It depends on Zn(2+) as a cofactor. The cofactor is NAD(+).

Its subcellular location is the cytoplasm. It catalyses the reaction 7-phospho-2-dehydro-3-deoxy-D-arabino-heptonate = 3-dehydroquinate + phosphate. It participates in metabolic intermediate biosynthesis; chorismate biosynthesis; chorismate from D-erythrose 4-phosphate and phosphoenolpyruvate: step 2/7. Functionally, catalyzes the conversion of 3-deoxy-D-arabino-heptulosonate 7-phosphate (DAHP) to dehydroquinate (DHQ). The chain is 3-dehydroquinate synthase from Jannaschia sp. (strain CCS1).